Consider the following 209-residue polypeptide: FMN-dependent NADH:quinone oxidoreductase 2 (209 aa).

Position 17–19 (17–19) interacts with FMN; that stretch reads SAS.

This sequence belongs to the azoreductase type 1 family. In terms of assembly, homodimer. Requires FMN as cofactor.

The enzyme catalyses 2 a quinone + NADH + H(+) = 2 a 1,4-benzosemiquinone + NAD(+). It catalyses the reaction N,N-dimethyl-1,4-phenylenediamine + anthranilate + 2 NAD(+) = 2-(4-dimethylaminophenyl)diazenylbenzoate + 2 NADH + 2 H(+). In terms of biological role, quinone reductase that provides resistance to thiol-specific stress caused by electrophilic quinones. Its function is as follows. Also exhibits azoreductase activity. Catalyzes the reductive cleavage of the azo bond in aromatic azo compounds to the corresponding amines. The polypeptide is FMN-dependent NADH:quinone oxidoreductase 2 (Lactiplantibacillus plantarum (strain ATCC BAA-793 / NCIMB 8826 / WCFS1) (Lactobacillus plantarum)).